The chain runs to 45 residues: Pyruvate dehydrogenase E1 component (45 aa).

Homodimer. The cofactor is thiamine diphosphate.

It catalyses the reaction N(6)-[(R)-lipoyl]-L-lysyl-[protein] + pyruvate + H(+) = N(6)-[(R)-S(8)-acetyldihydrolipoyl]-L-lysyl-[protein] + CO2. Its function is as follows. The pyruvate dehydrogenase complex catalyzes the overall conversion of pyruvate to acetyl-CoA and CO(2). It contains multiple copies of three enzymatic components: pyruvate dehydrogenase (E1), dihydrolipoamide acetyltransferase (E2) and lipoamide dehydrogenase (E3). In Azotobacter vinelandii, this protein is Pyruvate dehydrogenase E1 component.